The sequence spans 312 residues: Olfactory receptor 51B5 (312 aa).

Residues 1–23 are Extracellular-facing; that stretch reads MSSSGSSHPFLLTGFPGLEEAHH. Residues 24 to 44 traverse the membrane as a helical segment; that stretch reads WISVFFLFMYISILFGNGTLL. The Cytoplasmic portion of the chain corresponds to 45 to 52; sequence LLIKEDHN. A helical transmembrane segment spans residues 53-73; the sequence is LHEPMYFFLAMLAATDLGLAL. Residues 74–97 are Extracellular-facing; sequence TTMPTVLGVLWLDHREIGSAACFS. Cys-95 and Cys-187 form a disulfide bridge. A helical transmembrane segment spans residues 98–118; it reads QAYFIHSLSFLESGILLAMAY. Topologically, residues 119 to 137 are cytoplasmic; the sequence is DRFIAICNPLRYTSVLTNT. The chain crosses the membrane as a helical span at residues 138-158; the sequence is RVVKIGLGVLMRGFVSVVPPI. Residues 159-194 lie on the Extracellular side of the membrane; that stretch reads RPLYFFLYCHSHVLSHAFCLHQDVIKLACADTTFNR. The helical transmembrane segment at 195-215 threads the bilayer; it reads LYPAVLVVFIFVLDYLIIFIS. Residues 216–235 are Cytoplasmic-facing; that stretch reads YVLILKTVLSIASREERAKA. A helical transmembrane segment spans residues 236–256; sequence LITCVSHICCVLVFYVTVIGL. Residues 257–271 lie on the Extracellular side of the membrane; the sequence is SLIHRFGKQVPHIVH. A helical transmembrane segment spans residues 272 to 292; it reads LIMSYAYFLFPPLMNPITYSV. The Cytoplasmic portion of the chain corresponds to 293 to 312; it reads KTKQIQNAILHLFTTHRIGT.

This sequence belongs to the G-protein coupled receptor 1 family.

The protein localises to the cell membrane. In terms of biological role, odorant receptor. This chain is Olfactory receptor 51B5 (OR51B5), found in Homo sapiens (Human).